A 391-amino-acid polypeptide reads, in one-letter code: Processive diacylglycerol beta-glucosyltransferase (391 aa).

Belongs to the glycosyltransferase 28 family. UgtP subfamily.

The protein resides in the cell membrane. It carries out the reaction a 1,2-diacyl-3-O-(beta-D-glucopyranosyl)-sn-glycerol + UDP-alpha-D-glucose = a 1,2-diacyl-3-O-(beta-D-Glc-(1-&gt;6)-beta-D-Glc)-sn-glycerol + UDP + H(+). It catalyses the reaction a 1,2-diacyl-sn-glycerol + UDP-alpha-D-glucose = a 1,2-diacyl-3-O-(beta-D-glucopyranosyl)-sn-glycerol + UDP + H(+). It functions in the pathway glycolipid metabolism; diglucosyl-diacylglycerol biosynthesis. In terms of biological role, processive glucosyltransferase involved in the biosynthesis of both the bilayer- and non-bilayer-forming membrane glucolipids. Is able to successively transfer two glucosyl residues to diacylglycerol (DAG), thereby catalyzing the formation of beta-monoglucosyl-DAG (3-O-(beta-D-glucopyranosyl)-1,2-diacyl-sn-glycerol) and beta-diglucosyl-DAG (3-O-(beta-D-glucopyranosyl-beta-(1-&gt;6)-D-glucopyranosyl)-1,2-diacyl-sn-glycerol). Beta-diglucosyl-DAG is the predominant glycolipid found in Bacillales and is also used as a membrane anchor for lipoteichoic acid (LTA). The chain is Processive diacylglycerol beta-glucosyltransferase from Staphylococcus aureus (strain bovine RF122 / ET3-1).